Reading from the N-terminus, the 417-residue chain is D-amino acid dehydrogenase (417 aa).

Ile-3–Trp-17 lines the FAD pocket.

This sequence belongs to the DadA oxidoreductase family. FAD serves as cofactor.

It carries out the reaction a D-alpha-amino acid + A + H2O = a 2-oxocarboxylate + AH2 + NH4(+). It functions in the pathway amino-acid degradation; D-alanine degradation; NH(3) and pyruvate from D-alanine: step 1/1. Functionally, oxidative deamination of D-amino acids. This is D-amino acid dehydrogenase from Aeromonas salmonicida (strain A449).